Consider the following 324-residue polypeptide: Methenyltetrahydromethanopterin cyclohydrolase (324 aa).

The protein belongs to the MCH family.

The protein localises to the cytoplasm. It carries out the reaction 5,10-methenyl-5,6,7,8-tetrahydromethanopterin + H2O = N(5)-formyl-5,6,7,8-tetrahydromethanopterin + H(+). Its pathway is one-carbon metabolism; formaldehyde degradation; formate from formaldehyde (H(4)MPT route): step 3/5. In terms of biological role, catalyzes the hydrolysis of methenyl-H(4)MPT(+) to 5-formyl-H(4)MPT. This is Methenyltetrahydromethanopterin cyclohydrolase from Methylobacterium sp. (strain 4-46).